The primary structure comprises 921 residues: uncharacterized protein (921 aa).

The kinase-like stretch occupies residues 334-628; sequence MTKRKFLSID…NLKSIYYDFF (295 aa). The span at 401–494 shows a compositional bias: low complexity; that stretch reads GSSEWSFGSS…NNNNSDGSSG (94 aa). Disordered stretches follow at residues 401–499 and 664–711; these read GSSE…DNRN and NLYS…NSNS.

This is an uncharacterized protein from Dictyostelium discoideum (Social amoeba).